Here is a 289-residue protein sequence, read N- to C-terminus: Polyamine aminopropyltransferase (289 aa).

Residues 5-245 enclose the PABS domain; the sequence is PGPIVLVEPL…YAVNYILGSL (241 aa). Position 36 (Gln36) interacts with S-methyl-5'-thioadenosine. His67 and Glu91 together coordinate spermidine. S-methyl-5'-thioadenosine contacts are provided by residues Asp111 and 143–144; that span reads DG. The active-site Proton acceptor is the Asp164.

The protein belongs to the spermidine/spermine synthase family. As to quaternary structure, homodimer or homotetramer.

The protein localises to the cytoplasm. The catalysed reaction is S-adenosyl 3-(methylsulfanyl)propylamine + putrescine = S-methyl-5'-thioadenosine + spermidine + H(+). It functions in the pathway amine and polyamine biosynthesis; spermidine biosynthesis; spermidine from putrescine: step 1/1. In terms of biological role, catalyzes the irreversible transfer of a propylamine group from the amino donor S-adenosylmethioninamine (decarboxy-AdoMet) to putrescine (1,4-diaminobutane) to yield spermidine. In Pyrobaculum arsenaticum (strain DSM 13514 / JCM 11321 / PZ6), this protein is Polyamine aminopropyltransferase.